We begin with the raw amino-acid sequence, 201 residues long: Ribosome maturation factor RimM (201 aa).

Residues 92 to 166 enclose the PRC barrel domain; that stretch reads DEDEFYHADL…RVVVEPPANF (75 aa). The interval 169-201 is disordered; sequence PAGPQPAEGEEMPDGALEALEGEEAGAGTAPQP.

This sequence belongs to the RimM family. In terms of assembly, binds ribosomal protein uS19.

It localises to the cytoplasm. An accessory protein needed during the final step in the assembly of 30S ribosomal subunit, possibly for assembly of the head region. Essential for efficient processing of 16S rRNA. May be needed both before and after RbfA during the maturation of 16S rRNA. It has affinity for free ribosomal 30S subunits but not for 70S ribosomes. The chain is Ribosome maturation factor RimM from Rhodospirillum centenum (strain ATCC 51521 / SW).